The sequence spans 525 residues: COP9 signalosome complex subunit 1b (525 aa).

A PCI domain is found at 298 to 460 (HFLNANFDHC…KILFAKEADQ (163 aa)).

This sequence belongs to the CSN1 family. Component of the CSN complex, probably composed of CSN1b, alien/CSN2, CSN3, CSN4, CSN5, CSN6, CSN7 and CSN8.

The protein localises to the cytoplasm. It localises to the nucleus. Its function is as follows. Essential component of the COP9 signalosome complex (CSN), a complex involved in various cellular and developmental processes. The CSN complex is an essential regulator of the ubiquitin (Ubl) conjugation pathway by mediating the deneddylation of the cullin subunits of the SCF-type E3 ligase complexes, leading to decrease the Ubl ligase activity of SCF. The CSN complex plays an essential role in oogenesis and embryogenesis and is required for proper photoreceptor R cell differentiation and promote lamina glial cell migration or axon targeting. It also promotes Ubl-dependent degradation of cyclin E (CycE) during early oogenesis. The sequence is that of COP9 signalosome complex subunit 1b (CSN1b) from Drosophila melanogaster (Fruit fly).